Reading from the N-terminus, the 249-residue chain is Phosphomannomutase 2 (249 aa).

Asp-12 acts as the Nucleophile in catalysis. Positions 12 and 14 each coordinate Mg(2+). The active-site Proton donor/acceptor is Asp-14. Residues Arg-21, Arg-123, Arg-134, Arg-141, Ser-179, and Asp-181 each coordinate alpha-D-mannose 1-phosphate. Mg(2+) is bound at residue Asp-209.

This sequence belongs to the eukaryotic PMM family. Homodimer.

It localises to the cytoplasm. The catalysed reaction is alpha-D-mannose 1-phosphate = D-mannose 6-phosphate. It participates in nucleotide-sugar biosynthesis; GDP-alpha-D-mannose biosynthesis; alpha-D-mannose 1-phosphate from D-fructose 6-phosphate: step 2/2. Functionally, involved in the synthesis of the GDP-mannose and dolichol-phosphate-mannose required for a number of critical mannosyl transfer reactions. The protein is Phosphomannomutase 2 (pmmB) of Dictyostelium discoideum (Social amoeba).